An 834-amino-acid polypeptide reads, in one-letter code: MTDMKIDRRQMLKLEAAAIAAAAAGMPSTSLAANLVTEREASELKWDKAACRFCGTGCSVMVATKDNRVVATHGDIKAEVNRGLNCVKGYFLSKIMYGHDRLTHPMLRKTNGKYDKNGEFTPVSWDEAFDIMALKFKDALKKRGPSGVGMFGSGQWTIWEGYAASKLFKAGFRTNNIDPNARHCMASAVAGMMRTFGIDEPAGCYDDIEAADAFVLWGSNMAEMHPILWTRVTDRRLSAPHVKVAVLSTFEHRSFDLADIGMVFKPQTDLYLLNAIANHIIKTGRVNKDFVQAHTVFKKGQTDIGYGLRPEHPLQKKATGAAKANDATDISFDEYAKFVSDYTLEKAAEMSGVPLNRLEALAELYADPKTKVVSFWTMGFNQHTRGVWCNNLVYNIHLLTGKIAEAGNSPFSLTGQPSACGTAREVGTFSHRLPADMVVTNKEHRTKAEHIWQLPEGTIPDKPGYHAVLQSRMLKDGLLNAYWVQVNNNLQAGPNANEETYPGFRNPDNFIVVSDAYPSVTALAADLILPTAMWVEKEGAYGNAERRTQFWHQLVSAPGEARSDLWQLMEFSKRFKIEEVWPEELIAKKPDVRGKTLFDVLYKNGQVDKFPLDQIEAGYANDESKAFGFYVHKGLFEEYAAFGRGHGHDLAPFEAYHKERGLRWPVVDGKETRWRFREGSDPYVKAGTGVQFYGFPDGKARIFALPYEPPAESPDKDYPFWLSTGRVVEHWHSGTMTRRVPELYKAFPEAVCFMHPDDAQEANLRRGDEVKVASRRGFIRARVETRGRDKPPRGLVFVPWFDESKLINKVTLDATDPISLQTDYKKCAVRIERV.

The segment at residues Met1–Ala32 is a signal peptide (tat-type signal). The 4Fe-4S Mo/W bis-MGD-type domain maps to Leu44 to Asp100. [4Fe-4S] cluster-binding residues include Cys51, Cys54, Cys58, and Cys86. Mo-bis(molybdopterin guanine dinucleotide) contacts are provided by residues Lys88, Gln155, Asn180, Cys184, Trp217 to Met224, Ser248 to His252, Gln267 to Asp269, Met378, Gln382, Asn488, Ser514 to Asp515, Lys537, Asp564, and Thr724 to Ser733. Trp800 provides a ligand contact to substrate. Residues Asn808 and Lys825 each coordinate Mo-bis(molybdopterin guanine dinucleotide).

It belongs to the prokaryotic molybdopterin-containing oxidoreductase family. NasA/NapA/NarB subfamily. As to quaternary structure, component of the periplasmic nitrate reductase NapAB complex composed of NapA and NapB. The cofactor is [4Fe-4S] cluster. Requires Mo-bis(molybdopterin guanine dinucleotide) as cofactor. Predicted to be exported by the Tat system. The position of the signal peptide cleavage has not been experimentally proven.

The protein localises to the periplasm. It carries out the reaction 2 Fe(II)-[cytochrome] + nitrate + 2 H(+) = 2 Fe(III)-[cytochrome] + nitrite + H2O. Functionally, catalytic subunit of the periplasmic nitrate reductase complex NapAB. Receives electrons from NapB and catalyzes the reduction of nitrate to nitrite. The protein is Periplasmic nitrate reductase of Bradyrhizobium sp. (strain BTAi1 / ATCC BAA-1182).